The following is a 97-amino-acid chain: Intermembrane phospholipid transport system binding protein MlaB (97 aa).

Residues 1–97 (MSESLSWMQT…YNLPADVLPR (97 aa)) enclose the STAS domain.

In terms of assembly, the complex is composed of two ATP-binding proteins (MlaF), two transmembrane proteins (MlaE), two cytoplasmic solute-binding proteins (MlaB) and six periplasmic solute-binding proteins (MlaD).

It localises to the cytoplasm. Part of the ABC transporter complex MlaFEDB, which is involved in a phospholipid transport pathway that maintains lipid asymmetry in the outer membrane by retrograde trafficking of phospholipids from the outer membrane to the inner membrane. MlaB plays critical roles in both the assembly and activity of the complex. May act by modulating MlaF structure and stability. This is Intermembrane phospholipid transport system binding protein MlaB from Escherichia coli (strain K12).